We begin with the raw amino-acid sequence, 96 residues long: Protein Vpr (96 aa).

The interval 1 to 42 (MEQAPEDQGPQREPYNEWTIEILEELKREAVRHFPRPWLHDL) is homooligomerization. Phosphoserine; by host is present on residues Ser-79, Ser-94, and Ser-96.

The protein belongs to the HIV-1 VPR protein family. In terms of assembly, homooligomer, may form homodimer. Interacts with p6-gag region of the Pr55 Gag precursor protein through a (Leu-X-X)4 motif near the C-terminus of the P6gag protein. Interacts with host UNG. May interact with host RAD23A/HHR23A. Interacts with host VPRBP/DCAF1, leading to hijack the CUL4A-RBX1-DDB1-DCAF1/VPRBP complex, mediating ubiquitination of host proteins such as TERT and ZGPAT and arrest of the cell cycle in G2 phase. In terms of processing, phosphorylated on several residues by host. These phosphorylations regulate VPR activity for the nuclear import of the HIV-1 pre-integration complex.

The protein localises to the virion. Its subcellular location is the host nucleus. The protein resides in the host extracellular space. In terms of biological role, during virus replication, may deplete host UNG protein, and incude G2-M cell cycle arrest. Acts by targeting specific host proteins for degradation by the 26S proteasome, through association with the cellular CUL4A-DDB1 E3 ligase complex by direct interaction with host VPRPB/DCAF-1. Cell cycle arrest reportedly occurs within hours of infection and is not blocked by antiviral agents, suggesting that it is initiated by the VPR carried into the virion. Additionally, VPR induces apoptosis in a cell cycle dependent manner suggesting that these two effects are mechanistically linked. Detected in the serum and cerebrospinal fluid of AIDS patient, VPR may also induce cell death to bystander cells. Its function is as follows. During virus entry, plays a role in the transport of the viral pre-integration (PIC) complex to the host nucleus. This function is crucial for viral infection of non-dividing macrophages. May act directly at the nuclear pore complex, by binding nucleoporins phenylalanine-glycine (FG)-repeat regions. This Human immunodeficiency virus type 1 group M subtype K (isolate 97ZR-EQTB11) (HIV-1) protein is Protein Vpr.